The following is a 233-amino-acid chain: MNIIKVNNASQGAARAYDIFAETLTKGATVFGLATGSTPVPLYQRLVESPLDFSQATAINLDEYLGLSGNDPQSYHFFMAQHLFNHKAFKQTFIPDGKNPDRQAATSQYDRIIEENPIDLQLLGLGRNGHIGFNEPGTAFDSKTHIVDLTQSTIDANARFFDHEVDVPTQAISMGIGSVMSAKHILLMAFGAEKADAVAQMISGPITEKLPASVLQQHPNVTVIIDDAAAAKL.

Residue Asp-62 is the Proton acceptor; for enolization step of the active site. The active-site For ring-opening step is the Asn-128. His-130 (proton acceptor; for ring-opening step) is an active-site residue. The active-site For ring-opening step is the Glu-135.

The protein belongs to the glucosamine/galactosamine-6-phosphate isomerase family. NagB subfamily.

It catalyses the reaction alpha-D-glucosamine 6-phosphate + H2O = beta-D-fructose 6-phosphate + NH4(+). It functions in the pathway amino-sugar metabolism; N-acetylneuraminate degradation; D-fructose 6-phosphate from N-acetylneuraminate: step 5/5. Its function is as follows. Catalyzes the reversible isomerization-deamination of glucosamine 6-phosphate (GlcN6P) to form fructose 6-phosphate (Fru6P) and ammonium ion. This is Glucosamine-6-phosphate deaminase from Leuconostoc citreum (strain KM20).